A 121-amino-acid chain; its full sequence is NLYQLWKMILQETGKNAAPSYGFYGCNCGVGSRGKPKDATDRCCFVHKCCYKALTDCSPKTDSYSYSWKDKTIVCGKNNPCLKQECECDKAVAICLRDNLDTYNKNYKIYPKPLCKKADDC.

Disulfide bonds link Cys26–Cys115, Cys28–Cys44, Cys43–Cys95, Cys49–Cys121, Cys50–Cys88, Cys57–Cys81, and Cys75–Cys86.

Belongs to the phospholipase A2 family. Group II subfamily. K49 sub-subfamily. In terms of assembly, homodimer. Expressed by the venom gland.

It localises to the secreted. Functionally, snake venom phospholipase A2 homolog that lacks enzymatic activity, but has myotoxic and cytolytic activities. This chain is Basic phospholipase A2 homolog, found in Metlapilcoatlus nummifer (Mexican jumping pitviper).